The sequence spans 546 residues: ATP synthase subunit alpha (546 aa).

Residue 172–179 (GDRKTGKT) coordinates ATP.

Belongs to the ATPase alpha/beta chains family. F-type ATPases have 2 components, CF(1) - the catalytic core - and CF(0) - the membrane proton channel. CF(1) has five subunits: alpha(3), beta(3), gamma(1), delta(1), epsilon(1). CF(0) has three main subunits: a(1), b(2) and c(9-12). The alpha and beta chains form an alternating ring which encloses part of the gamma chain. CF(1) is attached to CF(0) by a central stalk formed by the gamma and epsilon chains, while a peripheral stalk is formed by the delta and b chains.

It is found in the cell membrane. The catalysed reaction is ATP + H2O + 4 H(+)(in) = ADP + phosphate + 5 H(+)(out). Its function is as follows. Produces ATP from ADP in the presence of a proton gradient across the membrane. The alpha chain is a regulatory subunit. The protein is ATP synthase subunit alpha of Corynebacterium efficiens (strain DSM 44549 / YS-314 / AJ 12310 / JCM 11189 / NBRC 100395).